The sequence spans 167 residues: Crossover junction endodeoxyribonuclease RuvC (167 aa).

Residues aspartate 7, glutamate 67, and aspartate 139 contribute to the active site. Positions 7, 67, and 139 each coordinate Mg(2+).

The protein belongs to the RuvC family. In terms of assembly, homodimer which binds Holliday junction (HJ) DNA. The HJ becomes 2-fold symmetrical on binding to RuvC with unstacked arms; it has a different conformation from HJ DNA in complex with RuvA. In the full resolvosome a probable DNA-RuvA(4)-RuvB(12)-RuvC(2) complex forms which resolves the HJ. It depends on Mg(2+) as a cofactor.

The protein resides in the cytoplasm. It catalyses the reaction Endonucleolytic cleavage at a junction such as a reciprocal single-stranded crossover between two homologous DNA duplexes (Holliday junction).. In terms of biological role, the RuvA-RuvB-RuvC complex processes Holliday junction (HJ) DNA during genetic recombination and DNA repair. Endonuclease that resolves HJ intermediates. Cleaves cruciform DNA by making single-stranded nicks across the HJ at symmetrical positions within the homologous arms, yielding a 5'-phosphate and a 3'-hydroxyl group; requires a central core of homology in the junction. The consensus cleavage sequence is 5'-(A/T)TT(C/G)-3'. Cleavage occurs on the 3'-side of the TT dinucleotide at the point of strand exchange. HJ branch migration catalyzed by RuvA-RuvB allows RuvC to scan DNA until it finds its consensus sequence, where it cleaves and resolves the cruciform DNA. The sequence is that of Crossover junction endodeoxyribonuclease RuvC from Akkermansia muciniphila (strain ATCC BAA-835 / DSM 22959 / JCM 33894 / BCRC 81048 / CCUG 64013 / CIP 107961 / Muc).